Reading from the N-terminus, the 113-residue chain is UPF0102 protein Shal_4069 (113 aa).

It belongs to the UPF0102 family.

In Shewanella halifaxensis (strain HAW-EB4), this protein is UPF0102 protein Shal_4069.